The chain runs to 680 residues: WD repeat-containing protein 48 homolog (680 aa).

8 WD repeats span residues 26–65 (QHRN…SEKY), 71–110 (HHND…CMST), 113–152 (THRD…ALTA), 164–203 (GSKD…RIMK), 206–245 (GHTE…CVQT), 248–287 (VHKE…NKTL), 290–329 (EEQA…RCTL), and 350–389 (KGGA…KKEQ). The segment at 592–616 (ETTPSGGNANNSLQNSQSDANSEGS) is disordered.

The protein belongs to the WD repeat WDR48 family. Catalytic component of the Usp12-46 deubiquitylase complex consisting of Usp12-46, Wdr20 and Uaf1; regulatory subunit that, together wtih Wdr20, stabilizes Usp12-46. The Usp12-46 deubiquitylase complex associates with arr/arrow; the interaction leads to deubiquitination and stabilization of arr/arrow.

Regulatory component of the Usp12-46 deubiquitylase complex. activates deubiquitination by increasing the catalytic turnover without increasing the affinity of deubiquitinating enzymes for the substrate. The complex deubiquitylates the wg/wingless-signaling receptor arr/arrow, which stabilizes the receptor and increases its concentration at the cell surface; this enhances the sensitivity of cells to wg/wingless-signal stimulation. This increases the amplitude and spatial range of the signaling response to the wg/wingless morphogen gradient, facilitating the precise concentration-dependent regulation of its target genes. Together with Wdr20 and Usp12-46 required for wg/wingless-mediated signaling in the wing imaginal disc and for wg/wingless-dependent regulation of intestinal stem cell proliferation. The protein is WD repeat-containing protein 48 homolog of Drosophila sechellia (Fruit fly).